Reading from the N-terminus, the 182-residue chain is Troponin I, fast skeletal muscle (182 aa).

Glycine 2 is modified (N-acetylglycine). The involved in binding TNC stretch occupies residues 2 to 48 (GDEEKRNRAITARRQHLKSVMLQIAATELEKEESRRESEKQNYLSEH). Threonine 12 bears the Phosphothreonine mark. Over residues 29 to 41 (ELEKEESRRESEK) the composition is skewed to basic and acidic residues. Positions 29–53 (ELEKEESRRESEKQNYLSEHCPPLH) are disordered. Residues 97–117 (NQKLFDLRGKFKRPPLRRVRM) are involved in binding TNC and actin. The residue at position 118 (serine 118) is a Phosphoserine.

Belongs to the troponin I family. In terms of assembly, binds to actin and tropomyosin.

Troponin I is the inhibitory subunit of troponin, the thin filament regulatory complex which confers calcium-sensitivity to striated muscle actomyosin ATPase activity. In Rattus norvegicus (Rat), this protein is Troponin I, fast skeletal muscle (Tnni2).